The sequence spans 257 residues: DNA repair protein RecO (257 aa).

The protein belongs to the RecO family.

Functionally, involved in DNA repair and RecF pathway recombination. This Streptococcus thermophilus (strain ATCC BAA-491 / LMD-9) protein is DNA repair protein RecO.